A 183-amino-acid chain; its full sequence is MASRIPQFNQQVLYDTTPLPDSIPKVKELGASSAPLMSAAYFIGARCRDYNDDFMQCKNENPGKGEFECLKEGRRVTRCARSVIADINKSCLEEFRKHWTCLEDNNQQLWQCRPAEWKLNKCVFENLGLKKEIPDQPPNVTPVHLRKQMIYAHWPIPRSAEPFVPPTQTGDNNKAPAAASSSS.

2 CHCH domains span residues 44–87 (GARC…IADI) and 88–130 (NKSC…LGLK). 4 short sequence motifs (cx9C motif) span residues 47 to 57 (CRDYNDDFMQC), 69 to 79 (CLKEGRRVTRC), 91 to 101 (CLEEFRKHWTC), and 112 to 122 (CRPAEWKLNKC). Intrachain disulfides connect C47–C79, C57–C69, C91–C122, and C101–C112. Residues 161-183 (EPFVPPTQTGDNNKAPAAASSSS) are disordered.

This sequence belongs to the complex I NDUFA8 subunit family. In terms of assembly, complex I is composed of about 40 different subunits. This is a component of the hydrophobic fraction. It depends on iron-sulfur cluster as a cofactor.

The protein localises to the mitochondrion inner membrane. Its function is as follows. Accessory subunit of the mitochondrial membrane respiratory chain NADH dehydrogenase (Complex I), that is believed not to be involved in catalysis. Complex I functions in the transfer of electrons from NADH to the respiratory chain. The immediate electron acceptor for the enzyme is believed to be ubiquinone. This is NADH-ubiquinone oxidoreductase 20.8 kDa subunit from Neurospora crassa (strain ATCC 24698 / 74-OR23-1A / CBS 708.71 / DSM 1257 / FGSC 987).